Reading from the N-terminus, the 337-residue chain is UDP-3-O-acylglucosamine N-acyltransferase 1 (337 aa).

His238 functions as the Proton acceptor in the catalytic mechanism.

This sequence belongs to the transferase hexapeptide repeat family. LpxD subfamily. In terms of assembly, homotrimer.

The catalysed reaction is a UDP-3-O-[(3R)-3-hydroxyacyl]-alpha-D-glucosamine + a (3R)-hydroxyacyl-[ACP] = a UDP-2-N,3-O-bis[(3R)-3-hydroxyacyl]-alpha-D-glucosamine + holo-[ACP] + H(+). The protein operates within bacterial outer membrane biogenesis; LPS lipid A biosynthesis. In terms of biological role, catalyzes the N-acylation of UDP-3-O-acylglucosamine using 3-hydroxyacyl-ACP as the acyl donor. Is involved in the biosynthesis of lipid A, a phosphorylated glycolipid that anchors the lipopolysaccharide to the outer membrane of the cell. The sequence is that of UDP-3-O-acylglucosamine N-acyltransferase 1 from Koribacter versatilis (strain Ellin345).